The primary structure comprises 184 residues: Holliday junction branch migration complex subunit RuvA (184 aa).

The domain I stretch occupies residues M1–I64. The domain II stretch occupies residues K65–N137. Residue N137 is a region of interest, flexible linker. The tract at residues S138–A184 is domain III.

This sequence belongs to the RuvA family. In terms of assembly, homotetramer. Forms an RuvA(8)-RuvB(12)-Holliday junction (HJ) complex. HJ DNA is sandwiched between 2 RuvA tetramers; dsDNA enters through RuvA and exits via RuvB. An RuvB hexamer assembles on each DNA strand where it exits the tetramer. Each RuvB hexamer is contacted by two RuvA subunits (via domain III) on 2 adjacent RuvB subunits; this complex drives branch migration. In the full resolvosome a probable DNA-RuvA(4)-RuvB(12)-RuvC(2) complex forms which resolves the HJ.

The protein resides in the cytoplasm. Functionally, the RuvA-RuvB-RuvC complex processes Holliday junction (HJ) DNA during genetic recombination and DNA repair, while the RuvA-RuvB complex plays an important role in the rescue of blocked DNA replication forks via replication fork reversal (RFR). RuvA specifically binds to HJ cruciform DNA, conferring on it an open structure. The RuvB hexamer acts as an ATP-dependent pump, pulling dsDNA into and through the RuvAB complex. HJ branch migration allows RuvC to scan DNA until it finds its consensus sequence, where it cleaves and resolves the cruciform DNA. This Campylobacter fetus subsp. fetus (strain 82-40) protein is Holliday junction branch migration complex subunit RuvA.